Reading from the N-terminus, the 243-residue chain is 2-C-methyl-D-erythritol 4-phosphate cytidylyltransferase (243 aa).

Belongs to the IspD/TarI cytidylyltransferase family. IspD subfamily.

The catalysed reaction is 2-C-methyl-D-erythritol 4-phosphate + CTP + H(+) = 4-CDP-2-C-methyl-D-erythritol + diphosphate. Its pathway is isoprenoid biosynthesis; isopentenyl diphosphate biosynthesis via DXP pathway; isopentenyl diphosphate from 1-deoxy-D-xylulose 5-phosphate: step 2/6. In terms of biological role, catalyzes the formation of 4-diphosphocytidyl-2-C-methyl-D-erythritol from CTP and 2-C-methyl-D-erythritol 4-phosphate (MEP). This chain is 2-C-methyl-D-erythritol 4-phosphate cytidylyltransferase, found in Aeromonas hydrophila subsp. hydrophila (strain ATCC 7966 / DSM 30187 / BCRC 13018 / CCUG 14551 / JCM 1027 / KCTC 2358 / NCIMB 9240 / NCTC 8049).